The following is a 317-amino-acid chain: Tyrosine--tRNA ligase (317 aa).

Y32 contacts L-tyrosine. The 'HIGH' region motif lies at 37-45 (PSGEIHLGH). The L-tyrosine site is built by Y152, Q156, D159, and Q174. The 'KMSKS' region motif lies at 208-212 (KMSSS). An ATP-binding site is contributed by S211.

The protein belongs to the class-I aminoacyl-tRNA synthetase family. TyrS type 3 subfamily. In terms of assembly, homodimer.

Its subcellular location is the cytoplasm. It catalyses the reaction tRNA(Tyr) + L-tyrosine + ATP = L-tyrosyl-tRNA(Tyr) + AMP + diphosphate + H(+). Catalyzes the attachment of tyrosine to tRNA(Tyr) in a two-step reaction: tyrosine is first activated by ATP to form Tyr-AMP and then transferred to the acceptor end of tRNA(Tyr). The polypeptide is Tyrosine--tRNA ligase (Methanocorpusculum labreanum (strain ATCC 43576 / DSM 4855 / Z)).